A 116-amino-acid chain; its full sequence is UPF0134 protein MPN_038 (116 aa).

The protein belongs to the UPF0134 family.

This chain is UPF0134 protein MPN_038, found in Mycoplasma pneumoniae (strain ATCC 29342 / M129 / Subtype 1) (Mycoplasmoides pneumoniae).